Here is a 436-residue protein sequence, read N- to C-terminus: GTPase Der (436 aa).

EngA-type G domains are found at residues 4 to 167 (PTVA…PTEA) and 175 to 351 (IKFS…QSQN). Residues 10 to 17 (GRPNVGKS), 57 to 61 (DTGGI), 119 to 122 (NKVD), 181 to 188 (GRPNVGKS), 229 to 233 (DTAGM), and 294 to 297 (NKWD) contribute to the GTP site. Residues 352–436 (TRIPSAVLND…PIRLIARKRK (85 aa)) form the KH-like domain.

Belongs to the TRAFAC class TrmE-Era-EngA-EngB-Septin-like GTPase superfamily. EngA (Der) GTPase family. In terms of assembly, associates with the 50S ribosomal subunit.

GTPase that plays an essential role in the late steps of ribosome biogenesis. In Streptococcus mutans serotype c (strain ATCC 700610 / UA159), this protein is GTPase Der.